The following is a 488-amino-acid chain: Ribulose bisphosphate carboxylase large chain (488 aa).

Substrate contacts are provided by Asn127 and Thr177. Lys179 acts as the Proton acceptor in catalysis. Substrate is bound at residue Lys181. Mg(2+) is bound by residues Lys205, Asp207, and Glu208. Lys205 carries the N6-carboxylysine modification. His297 serves as the catalytic Proton acceptor. Substrate contacts are provided by Arg298, His330, and Ser382.

It belongs to the RuBisCO large chain family. Type I subfamily. Heterohexadecamer of 8 large chains and 8 small chains. Mg(2+) is required as a cofactor.

Its subcellular location is the plastid. It localises to the chloroplast. The enzyme catalyses 2 (2R)-3-phosphoglycerate + 2 H(+) = D-ribulose 1,5-bisphosphate + CO2 + H2O. It catalyses the reaction D-ribulose 1,5-bisphosphate + O2 = 2-phosphoglycolate + (2R)-3-phosphoglycerate + 2 H(+). Its function is as follows. RuBisCO catalyzes two reactions: the carboxylation of D-ribulose 1,5-bisphosphate, the primary event in carbon dioxide fixation, as well as the oxidative fragmentation of the pentose substrate in the photorespiration process. Both reactions occur simultaneously and in competition at the same active site. The polypeptide is Ribulose bisphosphate carboxylase large chain (Antithamnion sp. (Red alga)).